A 349-amino-acid chain; its full sequence is MAENAYSKAGVDVEAGYQVVERIKKHVARTERIGAMGALGSFGGMFDLSSLNLKEPVLVSGTDGVGTKLLLAIEADKHDTIGIDCVAMCVNDILAQGAEPLFFLDYIATGKTDPVKMEQIVKGVADGCEQAGAALIGGETAEMPDMYGADDYDLAGFTVGAVEKQKLITEGAVQAGDTLIGIPSSGIHSNGYSLVRKIFFKDNEFTLDAEISELDVPLVEELLKPTRIYVKPVLEVLKEVTVHGITHVTGGGFVENLPRMLTNDLAVKVELGSWPMLPIFDVVKKYGQLNEMEMYEIFNMGIGMVLAVAKSDVEKTLEVLVQNGEAAYVIGEVTTRESNAVIFAGGKKG.

The protein belongs to the AIR synthase family.

The protein localises to the cytoplasm. It carries out the reaction 2-formamido-N(1)-(5-O-phospho-beta-D-ribosyl)acetamidine + ATP = 5-amino-1-(5-phospho-beta-D-ribosyl)imidazole + ADP + phosphate + H(+). It functions in the pathway purine metabolism; IMP biosynthesis via de novo pathway; 5-amino-1-(5-phospho-D-ribosyl)imidazole from N(2)-formyl-N(1)-(5-phospho-D-ribosyl)glycinamide: step 2/2. This chain is Phosphoribosylformylglycinamidine cyclo-ligase, found in Listeria monocytogenes serovar 1/2a (strain ATCC BAA-679 / EGD-e).